We begin with the raw amino-acid sequence, 287 residues long: Probable WRKY transcription factor 57 (287 aa).

Residues 86–99 are compositionally biased toward low complexity; the sequence is TSTNNNPSATSSSS. A disordered region spans residues 86–137; sequence TSTNNNPSATSSSSEDPAENSTASAEKTPPPETPVKEKKKAQKRIRQPRFAF. Basic residues predominate over residues 122-132; sequence EKKKAQKRIRQ. Residues 141–206 constitute a DNA-binding region (WRKY); it reads SDVDNLEDGY…YEGQHCHQTI (66 aa). The interval 248 to 287 is disordered; sequence DNNAPSPRLPRPTTEDTPAVSTPSEEGLLGDIVPQTMRNP. Residues 262–271 are compositionally biased toward polar residues; it reads EDTPAVSTPS.

Belongs to the WRKY group II-c family.

It localises to the nucleus. Functionally, transcription factor. Interacts specifically with the W box (5'-(T)TGAC[CT]-3'), a frequently occurring elicitor-responsive cis-acting element. The protein is Probable WRKY transcription factor 57 (WRKY57) of Arabidopsis thaliana (Mouse-ear cress).